We begin with the raw amino-acid sequence, 155 residues long: Small ribosomal subunit protein uS7cz/uS7cy (155 aa).

It belongs to the universal ribosomal protein uS7 family. As to quaternary structure, part of the 30S ribosomal subunit.

The protein resides in the plastid. Its subcellular location is the chloroplast. One of the primary rRNA binding proteins, it binds directly to 16S rRNA where it nucleates assembly of the head domain of the 30S subunit. In Populus trichocarpa (Western balsam poplar), this protein is Small ribosomal subunit protein uS7cz/uS7cy (rps7-A).